The primary structure comprises 96 residues: ATP synthase subunit c (96 aa).

Helical transmembrane passes span 26-46 (GLVLFGAAIGMAIAAAGCGIG) and 68-88 (IMVTLILGLAFVESLAIYALV).

This sequence belongs to the ATPase C chain family. As to quaternary structure, F-type ATPases have 2 components, F(1) - the catalytic core - and F(0) - the membrane proton channel. F(1) has five subunits: alpha(3), beta(3), gamma(1), delta(1), epsilon(1). F(0) has three main subunits: a(1), b(2) and c(10-14). The alpha and beta chains form an alternating ring which encloses part of the gamma chain. F(1) is attached to F(0) by a central stalk formed by the gamma and epsilon chains, while a peripheral stalk is formed by the delta and b chains.

Its subcellular location is the cell inner membrane. Its function is as follows. F(1)F(0) ATP synthase produces ATP from ADP in the presence of a proton or sodium gradient. F-type ATPases consist of two structural domains, F(1) containing the extramembraneous catalytic core and F(0) containing the membrane proton channel, linked together by a central stalk and a peripheral stalk. During catalysis, ATP synthesis in the catalytic domain of F(1) is coupled via a rotary mechanism of the central stalk subunits to proton translocation. Functionally, key component of the F(0) channel; it plays a direct role in translocation across the membrane. A homomeric c-ring of between 10-14 subunits forms the central stalk rotor element with the F(1) delta and epsilon subunits. This is ATP synthase subunit c from Oleidesulfovibrio alaskensis (strain ATCC BAA-1058 / DSM 17464 / G20) (Desulfovibrio alaskensis).